We begin with the raw amino-acid sequence, 410 residues long: 3-phosphoshikimate 1-carboxyvinyltransferase (410 aa).

K27, S28, and R32 together coordinate 3-phosphoshikimate. A phosphoenolpyruvate-binding site is contributed by K27. Phosphoenolpyruvate-binding residues include G91 and R119. Positions 161, 162, 163, 297, 319, and 323 each coordinate 3-phosphoshikimate. Q163 is a phosphoenolpyruvate binding site. The active-site Proton acceptor is D297. Phosphoenolpyruvate-binding residues include R327, R368, and K394.

The protein belongs to the EPSP synthase family. In terms of assembly, monomer.

It is found in the cytoplasm. It carries out the reaction 3-phosphoshikimate + phosphoenolpyruvate = 5-O-(1-carboxyvinyl)-3-phosphoshikimate + phosphate. The protein operates within metabolic intermediate biosynthesis; chorismate biosynthesis. Its function is as follows. Catalyzes the transfer of the enolpyruvyl moiety of phosphoenolpyruvate (PEP) to the 5-hydroxyl of shikimate-3-phosphate (S3P) to produce enolpyruvyl shikimate-3-phosphate and inorganic phosphate. This Pyrococcus abyssi (strain GE5 / Orsay) protein is 3-phosphoshikimate 1-carboxyvinyltransferase.